The following is a 248-amino-acid chain: Conoporin-Cn1 (248 aa).

A signal peptide spans 1 to 23 (MGVQFPALKTMVTVFLLLMGNMS). An N-terminal region region spans residues 45 to 64 (TPGSSLYGVALKDLADTSYN). The phosphocholine site is built by Gly-120, Ser-138, Pro-140, Tyr-167, and Tyr-171.

This sequence belongs to the actinoporin family. Conoidea subfamily. As to quaternary structure, octamer or nonamer in membranes. Monomer in the soluble state. 9 isoforms are detected in the injectable venom, mainly corresponding to different oxidative states. In terms of tissue distribution, expressed by the venom duct.

Its subcellular location is the secreted. It localises to the nematocyst. It is found in the target cell membrane. Its function is as follows. Pore-forming protein that forms pores of around 1 nm and causes cardiac stimulation and cytolysis. The sequence is that of Conoporin-Cn1 from Conus consors (Singed cone).